A 255-amino-acid polypeptide reads, in one-letter code: Indole-3-glycerol phosphate synthase (255 aa).

It belongs to the TrpC family.

It carries out the reaction 1-(2-carboxyphenylamino)-1-deoxy-D-ribulose 5-phosphate + H(+) = (1S,2R)-1-C-(indol-3-yl)glycerol 3-phosphate + CO2 + H2O. It functions in the pathway amino-acid biosynthesis; L-tryptophan biosynthesis; L-tryptophan from chorismate: step 4/5. The chain is Indole-3-glycerol phosphate synthase from Streptococcus mutans serotype c (strain ATCC 700610 / UA159).